A 448-amino-acid polypeptide reads, in one-letter code: Methylenetetrahydrofolate--tRNA-(uracil-5-)-methyltransferase TrmFO (448 aa).

10-15 serves as a coordination point for FAD; the sequence is GAGLAG.

Belongs to the MnmG family. TrmFO subfamily. The cofactor is FAD.

The protein resides in the cytoplasm. The enzyme catalyses uridine(54) in tRNA + (6R)-5,10-methylene-5,6,7,8-tetrahydrofolate + NADH + H(+) = 5-methyluridine(54) in tRNA + (6S)-5,6,7,8-tetrahydrofolate + NAD(+). It catalyses the reaction uridine(54) in tRNA + (6R)-5,10-methylene-5,6,7,8-tetrahydrofolate + NADPH + H(+) = 5-methyluridine(54) in tRNA + (6S)-5,6,7,8-tetrahydrofolate + NADP(+). Its function is as follows. Catalyzes the folate-dependent formation of 5-methyl-uridine at position 54 (M-5-U54) in all tRNAs. The protein is Methylenetetrahydrofolate--tRNA-(uracil-5-)-methyltransferase TrmFO of Lactococcus lactis subsp. cremoris (strain MG1363).